We begin with the raw amino-acid sequence, 1170 residues long: DNA-directed RNA polymerase subunit beta' (1170 aa).

Zn(2+) contacts are provided by Cys-60, Cys-62, Cys-75, and Cys-78. Residues Asp-449, Asp-451, and Asp-453 each contribute to the Mg(2+) site. Zn(2+) contacts are provided by Cys-774, Cys-848, Cys-855, and Cys-858. The disordered stretch occupies residues 1145 to 1170 (EPGEENGEPGGERLYGMDELYGETAN).

The protein belongs to the RNA polymerase beta' chain family. In terms of assembly, the RNAP catalytic core consists of 2 alpha, 1 beta, 1 beta' and 1 omega subunit. When a sigma factor is associated with the core the holoenzyme is formed, which can initiate transcription. The cofactor is Mg(2+). Zn(2+) is required as a cofactor.

It carries out the reaction RNA(n) + a ribonucleoside 5'-triphosphate = RNA(n+1) + diphosphate. DNA-dependent RNA polymerase catalyzes the transcription of DNA into RNA using the four ribonucleoside triphosphates as substrates. The polypeptide is DNA-directed RNA polymerase subunit beta' (Pelotomaculum thermopropionicum (strain DSM 13744 / JCM 10971 / SI)).